A 122-amino-acid polypeptide reads, in one-letter code: Large ribosomal subunit protein uL14 (122 aa).

Belongs to the universal ribosomal protein uL14 family. As to quaternary structure, part of the 50S ribosomal subunit. Forms a cluster with proteins L3 and L19. In the 70S ribosome, L14 and L19 interact and together make contacts with the 16S rRNA in bridges B5 and B8.

Binds to 23S rRNA. Forms part of two intersubunit bridges in the 70S ribosome. This Shouchella clausii (strain KSM-K16) (Alkalihalobacillus clausii) protein is Large ribosomal subunit protein uL14.